The sequence spans 156 residues: Small ribosomal subunit protein uS7 (156 aa).

The protein belongs to the universal ribosomal protein uS7 family. As to quaternary structure, part of the 30S ribosomal subunit. Contacts proteins S9 and S11.

Its function is as follows. One of the primary rRNA binding proteins, it binds directly to 16S rRNA where it nucleates assembly of the head domain of the 30S subunit. Is located at the subunit interface close to the decoding center, probably blocks exit of the E-site tRNA. The chain is Small ribosomal subunit protein uS7 from Pectobacterium atrosepticum (strain SCRI 1043 / ATCC BAA-672) (Erwinia carotovora subsp. atroseptica).